Reading from the N-terminus, the 309-residue chain is MPDLLLLGLIGALTLLLLLTLLAFAGYSGLLTGVTVSAGSPPIRNITVAYKFHVGSYGDTGHLFTESCSISPKLRSIAVYYDNPHTVPPEKCRCAVGSILSEGEESPSPELIHLYQKFGFKIFSFPAPSHVVIATFPYTTPISIWLAARRVHPALDTYIKERKLCAHPRLEIYHQDKIHFMCPLARQGDFYVPEVKETERKCRELAEATDTQTDGTGADTSDASSVSLDVRPGSRETSATTLSPGAGNRGWDDGDNRSEHSYSESGASGSSFEELDLEGEGPLGEPRLNPEAKLLGPPRELSTPERGEE.

The Lumenal portion of the chain corresponds to M1–D3. Residues L4–F24 traverse the membrane as a helical; Signal-anchor for type III membrane protein segment. Residues A25–E309 are Cytoplasmic-facing. Residues P193–E309 are disordered. Positions A208 to S225 are enriched in low complexity. Phosphoserine is present on residues S238 and S243. Basic and acidic residues predominate over residues G250–Y262. A compositionally biased stretch (low complexity) spans S263 to F272. An LIR motif motif is present at residues F272–L275.

As to quaternary structure, interacts (via the LIR motif) with ATG8 family proteins MAP1LC3A, MAP1LC3B, GABARAP and GABARAPL1. Interacts with VCP/p97; bridging VCP/p97 to covalent DNA-protein cross-links (DPCs). Interacts with TOP1 (when sumoylated).

The protein localises to the endoplasmic reticulum membrane. Its subcellular location is the cytoplasmic vesicle. The protein resides in the autophagosome. It localises to the cytoplasm. It is found in the cytosol. The protein localises to the nucleus. Its subcellular location is the chromosome. In terms of biological role, major reticulophagy (also called ER-phagy) receptor that acts independently of other candidate reticulophagy receptors to remodel subdomains of the endoplasmic reticulum into autophagosomes upon nutrient stress, which then fuse with lysosomes for endoplasmic reticulum turnover. The ATG8-containing isolation membrane (IM) cradles a tubular segment of TEX264-positive ER near a three-way junction, allowing the formation of a synapse of 2 juxtaposed membranes with trans interaction between the TEX264 and ATG8 proteins. Expansion of the IM would extend the capture of ER, possibly through a 'zipper-like' process involving continued trans TEX264-ATG8 interactions, until poorly understood mechanisms lead to the fission of relevant membranes and, ultimately, autophagosomal membrane closure. Also involved in the repair of covalent DNA-protein cross-links (DPCs) during DNA synthesis: acts by bridging VCP/p97 to covalent DNA-protein cross-links (DPCs) and initiating resolution of DPCs by SPRTN. In Mus musculus (Mouse), this protein is Testis-expressed protein 264 homolog.